Reading from the N-terminus, the 146-residue chain is Dihydroneopterin aldolase 1 (146 aa).

Substrate-binding positions include Glu41, Tyr73, and 92 to 93 (LE). Lys119 acts as the Proton donor/acceptor in catalysis.

It belongs to the DHNA family. In terms of assembly, homooctamer. Forms a hollow cylinder assembled from two ring-shaped tetramers. Expressed in roots, leaves, stems and siliques.

The catalysed reaction is 7,8-dihydroneopterin = 6-hydroxymethyl-7,8-dihydropterin + glycolaldehyde. It participates in cofactor biosynthesis; tetrahydrofolate biosynthesis; 2-amino-4-hydroxy-6-hydroxymethyl-7,8-dihydropteridine diphosphate from 7,8-dihydroneopterin triphosphate: step 3/4. In terms of biological role, catalyzes the conversion of 7,8-dihydroneopterin into 6-hydroxymethyl-7,8-dihydropterin, a biosynthetic precursor of the vitamin tetrahydrofolate. Can use L-threo-dihydroneopterin and D-erythro-dihydroneopterin as substrates for the formation of 6-hydroxymethyldihydropterin, but it can also catalyze the epimerization of carbon 2' of dihydroneopterin and dihydromonapterin. The chain is Dihydroneopterin aldolase 1 from Arabidopsis thaliana (Mouse-ear cress).